We begin with the raw amino-acid sequence, 121 residues long: Ribonuclease CL2 (121 aa).

Substrate-binding residues include lysine 6 and arginine 9. Residue histidine 11 is the Proton acceptor of the active site. Cystine bridges form between cysteine 26–cysteine 81, cysteine 42–cysteine 92, and cysteine 60–cysteine 107. Substrate contacts are provided by residues 43 to 47 (KPSNT) and arginine 82. Histidine 114 (proton donor) is an active-site residue.

It belongs to the pancreatic ribonuclease family.

The protein resides in the secreted. In terms of biological role, pyrimidine-specific nuclease with preference for C. This chain is Ribonuclease CL2, found in Gallus gallus (Chicken).